The sequence spans 368 residues: Outer membrane protein assembly factor BamC (368 aa).

Positions 1–18 (MTTKFFIGTAIAVSVLSA) are cleaved as a signal peptide. A lipid anchor (N-palmitoyl cysteine) is attached at C19. C19 is lipidated: S-diacylglycerol cysteine.

Belongs to the BamC family. As to quaternary structure, part of the Bam complex.

It localises to the cell outer membrane. Functionally, part of the outer membrane protein assembly complex, which is involved in assembly and insertion of beta-barrel proteins into the outer membrane. The polypeptide is Outer membrane protein assembly factor BamC (Pseudoalteromonas atlantica (strain T6c / ATCC BAA-1087)).